The chain runs to 42 residues: Photosystem I reaction center subunit IX (42 aa).

The helical transmembrane segment at 7–27 (YLSTAPVLAAVWFGFLAGLLI) threads the bilayer.

The protein belongs to the PsaJ family.

The protein localises to the plastid. Its subcellular location is the chloroplast thylakoid membrane. In terms of biological role, may help in the organization of the PsaE and PsaF subunits. The sequence is that of Photosystem I reaction center subunit IX from Nephroselmis olivacea (Green alga).